The primary structure comprises 123 residues: Small ribosomal subunit protein uS12 (123 aa).

The tract at residues 1–24 (MPTINQLVRKGRTPQKVKSKVPAM) is disordered. The span at 9 to 19 (RKGRTPQKVKS) shows a compositional bias: basic residues. Residue aspartate 89 is modified to 3-methylthioaspartic acid.

It belongs to the universal ribosomal protein uS12 family. As to quaternary structure, part of the 30S ribosomal subunit. Contacts proteins S8 and S17. May interact with IF1 in the 30S initiation complex.

Functionally, with S4 and S5 plays an important role in translational accuracy. Its function is as follows. Interacts with and stabilizes bases of the 16S rRNA that are involved in tRNA selection in the A site and with the mRNA backbone. Located at the interface of the 30S and 50S subunits, it traverses the body of the 30S subunit contacting proteins on the other side and probably holding the rRNA structure together. The combined cluster of proteins S8, S12 and S17 appears to hold together the shoulder and platform of the 30S subunit. The sequence is that of Small ribosomal subunit protein uS12 from Sphingopyxis alaskensis (strain DSM 13593 / LMG 18877 / RB2256) (Sphingomonas alaskensis).